Here is a 303-residue protein sequence, read N- to C-terminus: Cytosolic Fe-S cluster assembly factor CFD1 (303 aa).

15–22 is a binding site for ATP; it reads GKGGVGKS. [4Fe-4S] cluster-binding residues include C199 and C202.

This sequence belongs to the Mrp/NBP35 ATP-binding proteins family. NUBP2/CFD1 subfamily. As to quaternary structure, heterotetramer of 2 NBP35 and 2 CFD1 chains. The cofactor is [4Fe-4S] cluster.

The protein resides in the cytoplasm. Its function is as follows. Component of the cytosolic iron-sulfur (Fe/S) protein assembly (CIA) machinery. Required for maturation of extramitochondrial Fe-S proteins. The NBP35-CFD1 heterotetramer forms a Fe-S scaffold complex, mediating the de novo assembly of an Fe-S cluster and its transfer to target apoproteins. The polypeptide is Cytosolic Fe-S cluster assembly factor CFD1 (Chaetomium globosum (strain ATCC 6205 / CBS 148.51 / DSM 1962 / NBRC 6347 / NRRL 1970) (Soil fungus)).